Consider the following 248-residue polypeptide: ATP synthase subunit a, chloroplastic (248 aa).

5 helical membrane-spanning segments follow: residues 37–57 (AQVLITSWVVIVLLSGLAFVT), 96–116 (VPFIGTLFLFIFVSNWSGALF), 135–155 (INTTVALALLTSVAYFYAGLH), 200–220 (LVVAVLISLVPLVVPIPMMFL), and 221–241 (GLFTSAIQALIFATLAAAYIG).

It belongs to the ATPase A chain family. In terms of assembly, F-type ATPases have 2 components, CF(1) - the catalytic core - and CF(0) - the membrane proton channel. CF(1) has five subunits: alpha(3), beta(3), gamma(1), delta(1), epsilon(1). CF(0) has four main subunits: a, b, b' and c.

It is found in the plastid. Its subcellular location is the chloroplast thylakoid membrane. Key component of the proton channel; it plays a direct role in the translocation of protons across the membrane. The chain is ATP synthase subunit a, chloroplastic from Psilotum nudum (Whisk fern).